A 124-amino-acid polypeptide reads, in one-letter code: Small ribosomal subunit protein bS16 (124 aa).

A compositionally biased stretch (basic and acidic residues) spans 84-110 (EKAERKNLKKGEPGKAAKERAEKRAAR). A disordered region spans residues 84–124 (EKAERKNLKKGEPGKAAKERAEKRAAREAAANAPAEEAASE). Residues 111–124 (EAAANAPAEEAASE) show a composition bias toward low complexity.

The protein belongs to the bacterial ribosomal protein bS16 family.

The polypeptide is Small ribosomal subunit protein bS16 (Paracoccus denitrificans (strain Pd 1222)).